The following is a 344-amino-acid chain: Putative glycosyltransferase EpsH (344 aa).

It belongs to the glycosyltransferase 2 family.

Its function is as follows. May be involved in the production of the exopolysaccharide (EPS) component of the extracellular matrix during biofilm formation. EPS is responsible for the adhesion of chains of cells into bundles. Required for biofilm maintenance. This Bacillus subtilis (strain 168) protein is Putative glycosyltransferase EpsH (epsH).